A 219-amino-acid polypeptide reads, in one-letter code: 7-cyano-7-deazaguanine synthase (219 aa).

10-20 (FSGGQDSTTCL) is an ATP binding site. The Zn(2+) site is built by cysteine 188, cysteine 196, cysteine 199, and cysteine 202.

It belongs to the QueC family. Zn(2+) serves as cofactor.

It carries out the reaction 7-carboxy-7-deazaguanine + NH4(+) + ATP = 7-cyano-7-deazaguanine + ADP + phosphate + H2O + H(+). It participates in purine metabolism; 7-cyano-7-deazaguanine biosynthesis. Catalyzes the ATP-dependent conversion of 7-carboxy-7-deazaguanine (CDG) to 7-cyano-7-deazaguanine (preQ(0)). The sequence is that of 7-cyano-7-deazaguanine synthase from Neisseria meningitidis serogroup A / serotype 4A (strain DSM 15465 / Z2491).